We begin with the raw amino-acid sequence, 208 residues long: Ribosomal RNA small subunit methyltransferase G (208 aa).

S-adenosyl-L-methionine-binding positions include glycine 78, phenylalanine 83, 101-103 (ERS), 129-130 (IE), and arginine 142.

It belongs to the methyltransferase superfamily. RNA methyltransferase RsmG family.

The protein resides in the cytoplasm. Functionally, specifically methylates the N7 position of a guanine in 16S rRNA. In Borrelia garinii subsp. bavariensis (strain ATCC BAA-2496 / DSM 23469 / PBi) (Borreliella bavariensis), this protein is Ribosomal RNA small subunit methyltransferase G.